Reading from the N-terminus, the 558-residue chain is MVKLTTWLKKIGWGETITQRIFCFYIYCILFGSLLLFLPIALQDNYQKVVSYGIDWQGKRFEQKTDYNFLDALFLSTSAFSDTGLSTVVVSKTYSIFGQIVLAVLLQLGGIGFVVIAFLAWRLFNFHKKEQYSFYEKLMLQSERGGSKLGNTSEMILVSIIFLFIVELIYGFLYGILFYFIPGFEPANLFADHAKVSTQLKALVVDSNQTIAAFNDINKAFQAGFFHSLSAVNNAGIDLIGGSSFVPYRNGLGIIIQWLTISQIIFGGIGYPCLFDGFEAIKKKIKYGRHTKHQFSLFTKLTVITNIVVILLFFTLLLMVEFIASDSLTNTIVNFSDEKKSLINTQLQSQSNQAIHASVFGNNPNASRVMQLFFMVISSRSAGFSVFPVASEIQTTKIIIALAMFIGASPSSTAGGIRTTTLAVIFLALVAKFKGQKEVKAFKRSIDQTTVIDAFLVLIISLIAVLLTAVLLPLSMEQPVSFIDALFETTSAFGTVGLSSGATVNIALDPNRNTFNFLALCLLMVMGQVGVSSSVLTFVRKHPKANSYSYPKEAVKIG.

12 helical membrane-spanning segments follow: residues 21 to 41 (IFCF…LPIA), 69 to 89 (FLDA…STVV), 100 to 120 (IVLA…AFLA), 160 to 180 (IIFL…LFYF), 220 to 240 (AFQA…IDLI), 251 to 271 (GLGI…GIGY), 303 to 323 (VITN…VEFI), 386 to 406 (VFPV…AMFI), 413 to 433 (TAGG…VAKF), 454 to 474 (AFLV…LLPL), 479 to 499 (PVSF…VGLS), and 519 to 539 (ALCL…LTFV).

Belongs to the TrkH potassium transport family.

The protein resides in the cell membrane. This is an uncharacterized protein from Mycoplasma genitalium (strain ATCC 33530 / DSM 19775 / NCTC 10195 / G37) (Mycoplasmoides genitalium).